A 521-amino-acid chain; its full sequence is MFS siderochrome iron transporter 1 (521 aa).

Residues 1–10 show a composition bias toward polar residues; it reads MDKTASLTSQ. The segment at 1–29 is disordered; it reads MDKTASLTSQDAEKHDPDALRKERATDPP. Residues 11–29 show a composition bias toward basic and acidic residues; that stretch reads DAEKHDPDALRKERATDPP. 5 consecutive transmembrane segments (helical) span residues 62–82, 99–119, 126–146, 148–168, and 187–207; these read WGLF…PLMG, FLSL…AFGC, WSFN…GGTQ, FVAL…NMPV, and ILSI…WPLI. A glycan (N-linked (GlcNAc...) asparagine) is linked at Asn209. A run of 6 helical transmembrane segments spans residues 229-249, 330-350, 379-399, 404-424, 431-451, and 466-486; these read YLLF…FFVF, LAWS…ASTL, VIIA…VEQP, KGTL…TTTA, LGWN…LYAI, and GLTA…ALYA. N-linked (GlcNAc...) asparagine glycosylation is present at Asn487. A helical membrane pass occupies residues 491-511; the sequence is AVPVYVSGALIIASGAMALLL.

The protein belongs to the major facilitator superfamily.

It is found in the membrane. In terms of biological role, major facilitator transporter probably involved in siderophore basidioferrin transmembrane transport. This chain is MFS siderochrome iron transporter 1, found in Ceriporiopsis subvermispora (strain B) (White-rot fungus).